The following is a 286-amino-acid chain: MTATLLDGKATAAEIKDELRVRVKALAERGVTPGLGTVLVGADPGSQAYVNGKHRDCAEVGVASLRRELPTDATQEQVDAVLADLNNDPACHGYIVQLPLPAHLDTQRVLELIDPDKDADGLHPVNLGRLVLGYPGPLPCTPRGIVELLRRHDVALRGARVVVIGRGNTVGRPLGLLLTRRSENATVTLCHTGTLDLTAHTRAADIVIVAAGVPGLLTSDMITPGAVVVDVGITRVIGPDGKGRYTGDVDPGVGEVAGALVPMPGGVGPMTRAMLLTNVVERAERG.

NADP(+) is bound by residues 165 to 167, T192, and I233; that span reads GRG.

Belongs to the tetrahydrofolate dehydrogenase/cyclohydrolase family. As to quaternary structure, homodimer.

The catalysed reaction is (6R)-5,10-methylene-5,6,7,8-tetrahydrofolate + NADP(+) = (6R)-5,10-methenyltetrahydrofolate + NADPH. The enzyme catalyses (6R)-5,10-methenyltetrahydrofolate + H2O = (6R)-10-formyltetrahydrofolate + H(+). It participates in one-carbon metabolism; tetrahydrofolate interconversion. Functionally, catalyzes the oxidation of 5,10-methylenetetrahydrofolate to 5,10-methenyltetrahydrofolate and then the hydrolysis of 5,10-methenyltetrahydrofolate to 10-formyltetrahydrofolate. The sequence is that of Bifunctional protein FolD 2 from Salinispora tropica (strain ATCC BAA-916 / DSM 44818 / JCM 13857 / NBRC 105044 / CNB-440).